Here is a 219-residue protein sequence, read N- to C-terminus: MRMIRFRKKIPYLRYLEMQEKLRKFRRECILFLEHAPIITGGINYNPENLLLGKEFLESQGIQVHFVQRGGDFTAHEPGQLVIYPHVDLKKRNLPIRFYLENLLQSVIDSARTTWGLNLITDSDSPGLYLESNSSKKICSIGVNFKSFFTSHGVAFNLNNDFTAFRCINPCGRNWTDMTSVEKLGLDSGFAKRNQFISFMKANLNSFLGPISKLTHTVI.

Positions 24–212 (KFRRECILFL…NLNSFLGPIS (189 aa)) constitute a BPL/LPL catalytic domain. Residues 69–76 (RGGDFTAH), 140–142 (SIG), and 153–155 (GVA) contribute to the substrate site. Residue C171 is the Acyl-thioester intermediate of the active site.

It belongs to the LipB family.

The protein localises to the cytoplasm. The enzyme catalyses octanoyl-[ACP] + L-lysyl-[protein] = N(6)-octanoyl-L-lysyl-[protein] + holo-[ACP] + H(+). It functions in the pathway protein modification; protein lipoylation via endogenous pathway; protein N(6)-(lipoyl)lysine from octanoyl-[acyl-carrier-protein]: step 1/2. Catalyzes the transfer of endogenously produced octanoic acid from octanoyl-acyl-carrier-protein onto the lipoyl domains of lipoate-dependent enzymes. Lipoyl-ACP can also act as a substrate although octanoyl-ACP is likely to be the physiological substrate. The protein is Octanoyltransferase of Leptospira borgpetersenii serovar Hardjo-bovis (strain JB197).